Here is a 223-residue protein sequence, read N- to C-terminus: Fibronectin type III domain-containing protein 10 (223 aa).

The signal sequence occupies residues 1-19 (MRAPPLLLLLAACAPPSGA). Over 20–179 (AVDPTPPGWE…FTAEPAAMQE (160 aa)) the chain is Extracellular. The Fibronectin type-III domain maps to 72–168 (LASAGGSLRA…VVPPELAECV (97 aa)). Residues N86 and N109 are each glycosylated (N-linked (GlcNAc...) asparagine). The chain crosses the membrane as a helical span at residues 180–200 (IVVAMTAVGGSICVMLVVICL). At 201 to 223 (LVAYITENLMHPTFRRPSLRRQP) the chain is on the cytoplasmic side.

The protein localises to the membrane. The chain is Fibronectin type III domain-containing protein 10 (Fndc10) from Mus musculus (Mouse).